We begin with the raw amino-acid sequence, 168 residues long: Pathogenesis-related protein 1B (168 aa).

The first 30 residues, 1 to 30, serve as a signal peptide directing secretion; the sequence is MGFFLFSQMPSFFLVSTLLLFLIISHSSHA. An SCP domain is found at 38–156; it reads LDAHNTARAD…NGGYVVSCNY (119 aa).

This sequence belongs to the CRISP family. In terms of processing, three disulfide bonds are present.

The protein localises to the vacuole. Its function is as follows. Probably involved in the defense reaction of plants against pathogens. The polypeptide is Pathogenesis-related protein 1B (Nicotiana tabacum (Common tobacco)).